A 731-amino-acid polypeptide reads, in one-letter code: MSLFLSNLSTNDSSLWKENHNSTDLLNPPGTLNIYLFCLTCLMTFAALVGSIYSLISLLKMQNRTVVSMLVASWSVDDLMSVLSVTIFMFLQWPNEVPGYFQFLCTTSALMYLCQGLSSNLKATLLVSYNFYTMHRGVGSQTASRRSGQVLGVVLTVWAASLLLSALPLCGWGAFVRTPWGCLVDCSSSYVLFLSIVYALAFGLLVGLSVPLTHRLLCSEEPPRLHSNYQEISRGASIPGTPPTAGRVVSLSPEDAPGPSLRRSGGCSPSSDTVFGPGAPAAAGAEACRRENRGTLYGTRSFTVSVAQKRFALILALTKVVLWLPMMMHMVVQNVVGFQSLPLETFSFLLTLLATTVTPVFVLSKRWTHLPCGCIINCRQNAYAVASDGKKIKRKGFEFNLSFQKSYGIYKIAHEDYYDDDENSIFYHNLMNSECETTKDPQRDNRNIFNAIKVEISTTPSLDSSTQRGINKCTNTDITEAKQDSNNKKDAFSDKTGGDINYEETTFSEGPERRLSHEESQKPDLSDWEWCRSKSERTPRQRSGYALAIPLCAFQGTVSLHAPTGKTLSLSTYEVSAEGQKITPASKKIEVYRSKSVGHEPNSEDSSSTFVDTSVKIHLEVLEICDNEEALDTVSIISNISQSSTQVRSPSLRYSRKENRFVSCDLGETASYSLFLPTSNPDGDINISIPDTVEAHRQNSKRQHQERDGYQEEIQLLNKAYRKREEESKGS.

Over 1–35 the chain is Extracellular; that stretch reads MSLFLSNLSTNDSSLWKENHNSTDLLNPPGTLNIY. Asn7, Asn11, and Asn21 each carry an N-linked (GlcNAc...) asparagine glycan. Residues 36–56 form a helical membrane-spanning segment; the sequence is LFCLTCLMTFAALVGSIYSLI. The Cytoplasmic portion of the chain corresponds to 57–69; that stretch reads SLLKMQNRTVVSM. The chain crosses the membrane as a helical span at residues 70–90; the sequence is LVASWSVDDLMSVLSVTIFMF. The Extracellular segment spans residues 91 to 109; it reads LQWPNEVPGYFQFLCTTSA. Cys105 and Cys182 form a disulfide bridge. The helical transmembrane segment at 110 to 132 threads the bilayer; the sequence is LMYLCQGLSSNLKATLLVSYNFY. The Cytoplasmic portion of the chain corresponds to 133-155; sequence TMHRGVGSQTASRRSGQVLGVVL. A helical transmembrane segment spans residues 156 to 176; it reads TVWAASLLLSALPLCGWGAFV. The Extracellular portion of the chain corresponds to 177–189; that stretch reads RTPWGCLVDCSSS. The chain crosses the membrane as a helical span at residues 190 to 210; it reads YVLFLSIVYALAFGLLVGLSV. The Cytoplasmic segment spans residues 211–310; sequence PLTHRLLCSE…SFTVSVAQKR (100 aa). The interval 234-271 is disordered; that stretch reads RGASIPGTPPTAGRVVSLSPEDAPGPSLRRSGGCSPSS. Residues 311–331 traverse the membrane as a helical segment; it reads FALILALTKVVLWLPMMMHMV. Residues 332–342 lie on the Extracellular side of the membrane; that stretch reads VQNVVGFQSLP. The chain crosses the membrane as a helical span at residues 343–363; sequence LETFSFLLTLLATTVTPVFVL. Over 364–731 the chain is Cytoplasmic; that stretch reads SKRWTHLPCG…RKREEESKGS (368 aa). The interval 475-526 is disordered; that stretch reads NTDITEAKQDSNNKKDAFSDKTGGDINYEETTFSEGPERRLSHEESQKPDLS. 2 stretches are compositionally biased toward basic and acidic residues: residues 479 to 497 and 510 to 526; these read TEAK…DKTG and GPER…PDLS.

This sequence belongs to the G-protein coupled receptor 1 family.

It is found in the cell membrane. In terms of biological role, orphan receptor. This Homo sapiens (Human) protein is Probable G-protein coupled receptor 149 (GPR149).